A 227-amino-acid polypeptide reads, in one-letter code: PKHD-type hydroxylase ABSDF3031 (227 aa).

The Fe2OG dioxygenase domain maps to 78–178 (KIIPPLFNRY…RFASFFWVQS (101 aa)). Residues His-96, Asp-98, and His-159 each contribute to the Fe cation site. Arg-169 is a binding site for 2-oxoglutarate.

Requires Fe(2+) as cofactor. L-ascorbate serves as cofactor.

The sequence is that of PKHD-type hydroxylase ABSDF3031 from Acinetobacter baumannii (strain SDF).